Here is a 629-residue protein sequence, read N- to C-terminus: Serine/threonine-protein kinase ICK (629 aa).

In terms of domain architecture, Protein kinase spans 4–284; sequence YTTIKQLGDG…ASQALRYPYF (281 aa). ATP-binding positions include 10-18 and Lys-33; that span reads LGDGTYGSV. Asp-125 serves as the catalytic Proton acceptor. Phosphothreonine; by CDK7 is present on Thr-157. A Phosphotyrosine modification is found at Tyr-159. Ser-161 carries the phosphoserine modification. 3 disordered regions span residues 292-376, 455-483, and 581-629; these read IISK…SLHN, SESV…SSAK, and SSLK…PSRR. Residues 296–306 are compositionally biased toward basic and acidic residues; that stretch reads DSGKPQREVQD. The segment covering 309–321 has biased composition (pro residues); sequence GPPPYIKPAPPAQ. Composition is skewed to low complexity over residues 322 to 344 and 457 to 470; these read APAK…PQHS and SVGT…QASS.

It belongs to the protein kinase superfamily. CMGC Ser/Thr protein kinase family. CDC2/CDKX subfamily. The cofactor is Mg(2+). Post-translationally, autophosphorylated on serine and threonine residues. Phosphorylation at Thr-157 by CDK7/Cak1p increases kinase activity. As to expression, highly expressed in colon and lung, lower levels present in heart, esophagus, stomach, small intestine and ovary. Localizes to the crypt region of large and small intestine.

The protein resides in the cytoplasm. The protein localises to the cytosol. Its subcellular location is the cell projection. It localises to the cilium. It is found in the nucleus. The protein resides in the cytoskeleton. The protein localises to the cilium basal body. The catalysed reaction is L-seryl-[protein] + ATP = O-phospho-L-seryl-[protein] + ADP + H(+). It carries out the reaction L-threonyl-[protein] + ATP = O-phospho-L-threonyl-[protein] + ADP + H(+). Its function is as follows. Has an essential role in ciliogenesis, particularly in neuronal and retinal progenitor cells. Phosphorylates KIF3A. Involved in the control of ciliary length. Regulates the ciliary localization of SHH pathway components as well as the localization of IFT components at ciliary tips. May play a role in cardiac development. Regulates intraflagellar transport (IFT) speed and negatively regulates cilium length in a cAMP and mTORC1 signaling -dependent manner and this regulation requires its kinase activity. The sequence is that of Serine/threonine-protein kinase ICK (Cilk1) from Mus musculus (Mouse).